The chain runs to 65 residues: Alpha-toxin Bot1 (65 aa).

One can recognise an LCN-type CS-alpha/beta domain in the interval 2-64 (RDAYIAQPEN…VPIRIPGKCH (63 aa)). 4 cysteine pairs are disulfide-bonded: Cys-12-Cys-63, Cys-16-Cys-36, Cys-22-Cys-46, and Cys-26-Cys-48. Phe-65 carries the phenylalanine amide modification.

Belongs to the long (4 C-C) scorpion toxin superfamily. Sodium channel inhibitor family. Alpha subfamily. In terms of tissue distribution, expressed by the venom gland.

Its subcellular location is the secreted. Alpha toxins bind voltage-independently at site-3 of sodium channels (Nav) and inhibit the inactivation of the activated channels, thereby blocking neuronal transmission. The chain is Alpha-toxin Bot1 from Buthus occitanus tunetanus (Common European scorpion).